A 135-amino-acid polypeptide reads, in one-letter code: MATFHFDLVSPEQVAFSGEVDQVDIPGAEGDFGVLAGHAPVVAVIRPGILTVTAGGAQQKIVVLGGIAEVSEKGLTVLADVATAVADLDMQDFAATIATMEQQLPGKVGDVLDRSIERLDHYKSIQHQISTTAMH.

The protein belongs to the ATPase epsilon chain family. As to quaternary structure, F-type ATPases have 2 components, CF(1) - the catalytic core - and CF(0) - the membrane proton channel. CF(1) has five subunits: alpha(3), beta(3), gamma(1), delta(1), epsilon(1). CF(0) has three main subunits: a, b and c.

It is found in the cell inner membrane. Its function is as follows. Produces ATP from ADP in the presence of a proton gradient across the membrane. The polypeptide is ATP synthase epsilon chain (Rhodopseudomonas palustris (strain BisB5)).